The following is a 440-amino-acid chain: uncharacterized protein (440 aa).

Residues 1–29 (MLRLQMMEGLIVKRTLLLILLLVISVSYA) form the signal peptide.

Belongs to the Mj S-layer protein family.

This is an uncharacterized protein from Methanocaldococcus jannaschii (strain ATCC 43067 / DSM 2661 / JAL-1 / JCM 10045 / NBRC 100440) (Methanococcus jannaschii).